A 276-amino-acid chain; its full sequence is Bis(5'-nucleosyl)-tetraphosphatase, symmetrical (276 aa).

Belongs to the Ap4A hydrolase family.

It carries out the reaction P(1),P(4)-bis(5'-adenosyl) tetraphosphate + H2O = 2 ADP + 2 H(+). Hydrolyzes diadenosine 5',5'''-P1,P4-tetraphosphate to yield ADP. The polypeptide is Bis(5'-nucleosyl)-tetraphosphatase, symmetrical (apaH) (Neisseria meningitidis serogroup A / serotype 4A (strain DSM 15465 / Z2491)).